A 156-amino-acid chain; its full sequence is uncharacterized protein (156 aa).

This is an uncharacterized protein from Escherichia coli (strain K12).